Reading from the N-terminus, the 207-residue chain is MGSQASKGGVAVEGKAAAADPAAVKTNGQENGHVKTNGDVSAKAEGDAATTNGSAEAAKESEAGAGDAIEPAPAAEGEAAKPEGEATKETPKKKKKKFSLKNSFKFKGISLKKSKKNAEVKEEAAAAAPATEEKPEENGAATEEKKEEEAKAEETPAAPVETPKAEEPAAKAEEPAAAKEEAAAPAVEATKQTEETNSTPAPSEQKE.

Low complexity-rich tracts occupy residues 1–25 (MGSQASKGGVAVEGKAAAADPAAVK) and 63–77 (AGAGDAIEPAPAAEG). Residues 1–207 (MGSQASKGGV…STPAPSEQKE (207 aa)) are disordered. Gly2 carries the N-myristoyl glycine lipid modification. Positions 78–90 (EAAKPEGEATKET) are enriched in basic and acidic residues. An effector domain involved in lipid-binding region spans residues 93-116 (KKKKKFSLKNSFKFKGISLKKSKK). Over residues 100–109 (LKNSFKFKGI) the composition is skewed to low complexity. Composition is skewed to basic and acidic residues over residues 131 to 154 (TEEKPEENGAATEEKKEEEAKAEE) and 163 to 182 (PKAEEPAAKAEEPAAAKEEA). The span at 195 to 207 (ETNSTPAPSEQKE) shows a compositional bias: polar residues.

It belongs to the MARCKS family. In terms of tissue distribution, strongly expressed in brain and eye. Also detected at lower levels in muscle.

The protein localises to the cytoplasm. It localises to the cytoskeleton. It is found in the cell membrane. Its function is as follows. Involved in the control of cell movement by regulating actin cytoskeleton homeostasis and filopodium and lamellipodium formation. The protein is MARCKS-related protein 1-B of Danio rerio (Zebrafish).